A 294-amino-acid chain; its full sequence is Elongation factor Ts (294 aa).

The tract at residues T82 to V85 is involved in Mg(2+) ion dislocation from EF-Tu.

It belongs to the EF-Ts family.

The protein localises to the cytoplasm. In terms of biological role, associates with the EF-Tu.GDP complex and induces the exchange of GDP to GTP. It remains bound to the aminoacyl-tRNA.EF-Tu.GTP complex up to the GTP hydrolysis stage on the ribosome. The sequence is that of Elongation factor Ts from Nitrosomonas eutropha (strain DSM 101675 / C91 / Nm57).